We begin with the raw amino-acid sequence, 644 residues long: Translation factor guf1, mitochondrial (644 aa).

The transit peptide at 1 to 31 directs the protein to the mitochondrion; it reads MTLRRFSYTFQARILRGLQARPVFVLPSRSH. Residues 51–232 form the tr-type G domain; it reads VNIRNWAIIS…AIIQRVPHPI (182 aa). Residues 60–67, 125–129, and 179–182 each bind GTP; these read SHIDHGKS, DTPGH, and NKID.

Belongs to the TRAFAC class translation factor GTPase superfamily. Classic translation factor GTPase family. LepA subfamily.

The protein resides in the mitochondrion inner membrane. It catalyses the reaction GTP + H2O = GDP + phosphate + H(+). Promotes mitochondrial protein synthesis. May act as a fidelity factor of the translation reaction, by catalyzing a one-codon backward translocation of tRNAs on improperly translocated ribosomes. Binds to mitochondrial ribosomes in a GTP-dependent manner. In Schizosaccharomyces japonicus (strain yFS275 / FY16936) (Fission yeast), this protein is Translation factor guf1, mitochondrial (guf1).